The following is a 1356-amino-acid chain: Kinesin-like protein KIF24 (1356 aa).

The region spanning 1-64 (MASWLYECLC…FQLIKIIKIM (64 aa)) is the SAM domain. Residues 93-119 (GPRRQLHFDSPSASKDKMANNETGSLS) are disordered. Ser102 is subject to Phosphoserine. The Kinesin motor domain occupies 218-541 (KIRVCVRKRP…LRYADRVKEL (324 aa)). 308 to 315 (GQTGAGKT) provides a ligand contact to ATP. Residue Ser473 is modified to Phosphoserine. The interval 473-702 (SLLALKECIR…PTRGKKVQPV (230 aa)) is interaction with MPHOSPH9. Residues 552–571 (TSQNQTSANASPKRIQSSPV) show a composition bias toward polar residues. 5 disordered regions span residues 552–581 (TSQN…CSPK), 597–664 (PTKV…LCSE), 788–840 (EGRL…STAL), 897–947 (RGAL…HQKP), and 964–998 (VPEQ…DQRD). Ser579 is subject to Phosphoserine. A Phosphothreonine; by NEK2 modification is found at Thr615. Position 616 is a phosphoserine; by NEK2 (Ser616). 3 positions are modified to phosphoserine: Ser640, Ser817, and Ser820. Positions 640 to 653 (SPRKGTTRSGHSIK) are enriched in basic residues. Residues 810-821 (QAEDLDDSDFSE) show a composition bias toward acidic residues. Positions 830–840 (QPAMKQGSTAL) are enriched in polar residues. The span at 970 to 979 (GSLSSPSPEN) shows a compositional bias: polar residues. Ser1008 bears the Phosphoserine mark. The segment at 1109–1140 (LSSSPPDNRPSGDLPALSPSPIHQHSPDKLPG) is disordered.

This sequence belongs to the TRAFAC class myosin-kinesin ATPase superfamily. Kinesin family. Interacts with CCP110, CEP97, TALPID3. Interacts with MPHOSPH9. As to expression, expressed in brain, spinal cord, and small intestine.

It is found in the cytoplasm. Its subcellular location is the cytoskeleton. It localises to the microtubule organizing center. The protein localises to the centrosome. The protein resides in the centriole. Its function is as follows. Microtubule-dependent motor protein that acts as a negative regulator of ciliogenesis by mediating recruitment of CCP110 to mother centriole in cycling cells, leading to restrict nucleation of cilia at centrioles. Mediates depolymerization of microtubules of centriolar origin, possibly to suppress aberrant cilia formation. Following activation by NEK2 involved in disassembly of primary cilium during G2/M phase but does not disassemble fully formed ciliary axonemes. As cilium assembly and disassembly is proposed to coexist in a dynamic equilibrium may suppress nascent cilium assembly and, potentially, ciliar re-assembly in cells that have already disassembled their cilia ensuring the completion of cilium removal in the later stages of the cell cycle. Plays an important role in recruiting MPHOSPH9, a negative regulator of cilia formation to the distal end of mother centriole. In Mus musculus (Mouse), this protein is Kinesin-like protein KIF24 (Kif24).